The primary structure comprises 247 residues: Probable dihydroorotate dehydrogenase B (NAD(+)), electron transfer subunit (247 aa).

Residues 1-87 (MLRRVSIEET…RGPYGHGFSG (87 aa)) form the FAD-binding FR-type domain. Residues C201, C206, C209, and C217 each coordinate [2Fe-2S] cluster.

It belongs to the PyrK family. In terms of assembly, heterotetramer of 2 PyrK and 2 PyrD type B subunits. [2Fe-2S] cluster serves as cofactor. It depends on FAD as a cofactor.

Its pathway is pyrimidine metabolism; UMP biosynthesis via de novo pathway; orotate from (S)-dihydroorotate (NAD(+) route): step 1/1. In terms of biological role, responsible for channeling the electrons from the oxidation of dihydroorotate from the FMN redox center in the PyrD type B subunit to the ultimate electron acceptor NAD(+). The chain is Probable dihydroorotate dehydrogenase B (NAD(+)), electron transfer subunit from Pyrococcus furiosus (strain ATCC 43587 / DSM 3638 / JCM 8422 / Vc1).